Consider the following 288-residue polypeptide: Aquaporin NIP2-1 (288 aa).

Methionine 1 carries the post-translational modification N-acetylmethionine. Transmembrane regions (helical) follow at residues 50 to 70 (LLAE…AIAV) and 77 to 97 (VVTL…LVYC). The NPA 1 signature appears at 106–108 (NPA). The next 3 membrane-spanning stretches (helical) occupy residues 126 to 146 (AYIT…RLLF), 170 to 190 (LQAF…VCAV), and 202 to 222 (GLII…VSGA). The NPA 2 motif lies at 225–227 (NPA). A helical membrane pass occupies residues 234-254 (LVWGCYKGIWIYLLAPTLGAV). Residue serine 278 is modified to Phosphoserine.

Belongs to the MIP/aquaporin (TC 1.A.8) family. NIP (TC 1.A.8.12) subfamily. As to expression, specifically expressed in roots with high expression in root elongation zone and root stele.

The protein localises to the endoplasmic reticulum membrane. Its function is as follows. Low water transport activity in yeast cells. The polypeptide is Aquaporin NIP2-1 (NIP2-1) (Arabidopsis thaliana (Mouse-ear cress)).